Consider the following 654-residue polypeptide: Acetyl-coenzyme A synthetase (654 aa).

Residues 196 to 199 (RGGK) and Thr316 contribute to the CoA site. ATP-binding positions include 392 to 394 (GEP), 416 to 421 (DTWWQT), Asp507, and Arg522. Residue Ser530 participates in CoA binding. ATP is bound at residue Arg533. 2 residues coordinate Mg(2+): Val544 and Val549. At Lys619 the chain carries N6-acetyllysine.

It belongs to the ATP-dependent AMP-binding enzyme family. Mg(2+) is required as a cofactor. Post-translationally, acetylated. Deacetylation by the SIR2-homolog deacetylase activates the enzyme.

It catalyses the reaction acetate + ATP + CoA = acetyl-CoA + AMP + diphosphate. Functionally, catalyzes the conversion of acetate into acetyl-CoA (AcCoA), an essential intermediate at the junction of anabolic and catabolic pathways. AcsA undergoes a two-step reaction. In the first half reaction, AcsA combines acetate with ATP to form acetyl-adenylate (AcAMP) intermediate. In the second half reaction, it can then transfer the acetyl group from AcAMP to the sulfhydryl group of CoA, forming the product AcCoA. The protein is Acetyl-coenzyme A synthetase of Chromobacterium violaceum (strain ATCC 12472 / DSM 30191 / JCM 1249 / CCUG 213 / NBRC 12614 / NCIMB 9131 / NCTC 9757 / MK).